The chain runs to 506 residues: MHLQALTGLATLAVTAASQTLWSRDVDYKALSKELSASAKVYFPGTEDFDAASKRWSNLDKPTVNIVAVPATENDVVEITLDLTQANTLRQVKFANKKNLPFLAQNSAHGAITTLGQMKQGIEIYLNQLSGVKIAKDGKSVTILGGTASKKVTMGLWEAGKQTVTGCCECVGYVGPALGGGHGWLQGRHGLIADQFESMNIVLANGTLATVDENSELWWALKGAGHNFGIVTSVTSKTYDAKIKNWAFASLTFKGEKVEELYETINKYILKNGTQPTDLINWSYWFNIPDLDPTGPIVQILLMQEGVDVVDKAYTGPFQELKPLAVDAKKGVYTDLAKWVGVTTEDGPCQKNGAMNPRFPIYLQDYNPAAQKKAFNYFADNIRGDSIFNGSLVTFDGYSTEGVKAIDSKSTAFAYRNQNILVGPLLSYQSNGTATDEKASEIGHKVRDILHEGTGRDTVPVYVNYAFGDEGPKEWYGSEAWRQSRLQELKEAYDPKGMFSFYAPIA.

Positions 1 to 17 (MHLQALTGLATLAVTAA) are cleaved as a signal peptide. An FAD-binding PCMH-type domain is found at 59–241 (LDKPTVNIVA…TSVTSKTYDA (183 aa)). N205, N272, N281, N389, and N431 each carry an N-linked (GlcNAc...) asparagine glycan.

The protein belongs to the oxygen-dependent FAD-linked oxidoreductase family. It depends on FAD as a cofactor.

The protein operates within pigment biosynthesis. Functionally, FAD-linked oxidoreductase; part of the gene cluster that mediates the biosynthesis of the yellow pigment chrysogine. Pyruvic acid and anthranilic acid are likely substrates for the nonribosomal peptide synthetase chry1/NRPS14, with pyruvic acid adenylated by the first A domain and anthranilic acid by the second. If pyruvic acid and anthranilic acid are merged and released from chry1/NRPS14 by hydrolysis, a subsequent amidation would lead to 2-pyruvoylaminobenzamide. This process is probably catalyzed by the amidotransferase chry2 using glutamine as amino donor. The dehydrogenase chry5 that has a terminal berberine bridge domain for C-N cyclization could catalyze the cyclization of 2-pyruvoylaminobenzamide to yield acetyl-4(3H)-quinazolidinone. A final reduction of acetyl-4(3H)-quinazolidinone catalyzed by the oxidoreductase chry4 would result in chrysogine. This chain is FAD-linked oxidoreductase chry5, found in Gibberella zeae (strain ATCC MYA-4620 / CBS 123657 / FGSC 9075 / NRRL 31084 / PH-1) (Wheat head blight fungus).